A 67-amino-acid chain; its full sequence is Large ribosomal subunit protein uL29 (67 aa).

The protein belongs to the universal ribosomal protein uL29 family.

The protein is Large ribosomal subunit protein uL29 of Desulfitobacterium hafniense (strain Y51).